The primary structure comprises 238 residues: Ribonuclease PH (238 aa).

Residues R86 and 124 to 126 (GTR) contribute to the phosphate site.

This sequence belongs to the RNase PH family. In terms of assembly, homohexameric ring arranged as a trimer of dimers.

The catalysed reaction is tRNA(n+1) + phosphate = tRNA(n) + a ribonucleoside 5'-diphosphate. Phosphorolytic 3'-5' exoribonuclease that plays an important role in tRNA 3'-end maturation. Removes nucleotide residues following the 3'-CCA terminus of tRNAs; can also add nucleotides to the ends of RNA molecules by using nucleoside diphosphates as substrates, but this may not be physiologically important. Probably plays a role in initiation of 16S rRNA degradation (leading to ribosome degradation) during starvation. This chain is Ribonuclease PH, found in Citrobacter koseri (strain ATCC BAA-895 / CDC 4225-83 / SGSC4696).